A 520-amino-acid polypeptide reads, in one-letter code: MSNISTDLQDVEKIIVLDYGSQYNQLISRRIRDIGVFSELKSHKISAAEVREVNPVGIILSGGPNSVYEDGSFDIDPEIFELGIPILGICYGMQLLTHKLGGKVVPAGDAGNREYGQSTLTHTPSALFESTPDEQTVLMSHGDAVTEIPADFVRTGTSADCPYAAIENPDKHIYGIQFHPEVRHSVYGNDILRNFALNICKAKGDWSMDNFIDMQIKKIRETVGDKRVLLGLSGGVDSSVVGVLLQKAIGDQLICIFVDHGLLRKGEADQVMDMLGGKFGLNIVKADAAKRFLDKLAGVSDPEQKRKIIGNEFVYVFDDEASKLKDVKFLAQGTLYTDVIESGTDTAQTIKSHHNVGGLPEDMQFELIEPLNTLYKDEVRALGTELGMPDHIVWRQPFPGPGLAIRVMGEITEEKLETVRESDAILREEIAKAGLDRDIWQYFTVNTGVRSVGVMGDGRTYDYTIAIRAITSIDGMTADFAKIPWEVLQKISVRIVNEVDHVNRIVYDITSKPPATVEWE.

The Glutamine amidotransferase type-1 domain maps to 13–205 (KIIVLDYGSQ…ALNICKAKGD (193 aa)). The Nucleophile role is filled by cysteine 90. Catalysis depends on residues histidine 179 and glutamate 181. The GMPS ATP-PPase domain maps to 206–395 (WSMDNFIDMQ…LGMPDHIVWR (190 aa)). 233 to 239 (SGGVDSS) lines the ATP pocket.

Homodimer.

The catalysed reaction is XMP + L-glutamine + ATP + H2O = GMP + L-glutamate + AMP + diphosphate + 2 H(+). Its pathway is purine metabolism; GMP biosynthesis; GMP from XMP (L-Gln route): step 1/1. Its function is as follows. Catalyzes the synthesis of GMP from XMP. The protein is GMP synthase [glutamine-hydrolyzing] of Streptococcus pneumoniae (strain P1031).